We begin with the raw amino-acid sequence, 679 residues long: Stress-70 protein, mitochondrial (679 aa).

The N-terminal 46 residues, 1 to 46 (MISASRAAAARLVGAAASRGPTAARHQDSWNGLSHEAFRLVSRRDY), are a transit peptide targeting the mitochondrion. The segment at 1–432 (MISASRAAAA…IQGGVLAGDV (432 aa)) is interaction with NFS1. ADP-binding residues include Thr-63 and Asn-64. A nucleotide-binding domain (NBD) region spans residues 63-431 (TNSCVAVMEG…AIQGGVLAGD (369 aa)). Lys-76 is subject to N6-acetyllysine. A Phosphothreonine modification is found at Thr-87. Lys-135 and Lys-138 each carry N6-acetyllysine; alternate. Lys-135 and Lys-138 each carry N6-succinyllysine; alternate. Lys-143 is subject to N6-acetyllysine. Residue Lys-206 is modified to N6-acetyllysine; alternate. Lys-206 bears the N6-succinyllysine; alternate mark. Lys-206 carries the post-translational modification N6-malonyllysine; alternate. Lys-234 and Lys-288 each carry N6-acetyllysine. The residue at position 300 (Lys-300) is an N6-acetyllysine; alternate. Residue Lys-300 is modified to N6-succinyllysine; alternate. Glu-313, Lys-316, and Ser-320 together coordinate ADP. Lys-368 is modified (N6-succinyllysine). Residues Gly-388 and Arg-391 each contribute to the ADP site. At Lys-394 the chain carries N6-succinyllysine. Position 408 is a phosphoserine (Ser-408). An interdomain linker region spans residues 432-441 (VTDVLLLDVT). The interaction with FXN and ISCU stretch occupies residues 432-679 (VTDVLLLDVT…QKEDQKEEKQ (248 aa)). The segment at 442–679 (PLSLGIETLG…QKEDQKEEKQ (238 aa)) is substrate-binding domain (SBD). Arg-513 carries the post-translational modification Omega-N-methylarginine. N6-acetyllysine; alternate occurs at positions 567 and 600. 2 positions are modified to N6-succinyllysine; alternate: Lys-567 and Lys-600. Lys-610 is modified (N6-succinyllysine). Residue Lys-612 is modified to N6-acetyllysine. N6-acetyllysine; alternate is present on Lys-646. An N6-succinyllysine; alternate modification is found at Lys-646. The segment at 656–679 (ASEREGSGSSGTGEQKEDQKEEKQ) is disordered. Residues 669-679 (EQKEDQKEEKQ) are compositionally biased toward basic and acidic residues.

The protein belongs to the heat shock protein 70 family. In terms of assembly, interacts strongly with the intermediate form of FXN and weakly with its mature form. Interacts with HSCB. Associates with the mitochondrial contact site and cristae organizing system (MICOS) complex, composed of at least MICOS10/MIC10, CHCHD3/MIC19, CHCHD6/MIC25, APOOL/MIC27, IMMT/MIC60, APOO/MIC23/MIC26 and QIL1/MIC13. This complex was also known under the names MINOS or MitOS complex. The MICOS complex associates with mitochondrial outer membrane proteins SAMM50, MTX1, MTX2 and DNAJC11, mitochondrial inner membrane protein TMEM11 and with HSPA9. Interacts with DNLZ, the interaction is required to prevent self-aggregation. Interacts with TESPA1. Interacts with PDPN. Interacts with NFU1, NFS1 and ISCU. Interacts with TP53; the interaction promotes TP53 degradation. Interacts (via SBD domain) with UBXN2A; the interaction with UBXN2A inhibits HSPA9 interaction with and degradation of TP53, thereby promotes TP53 translocation to the nucleus. Interacts with ITPR1 AND VDAC1; this interaction couples ITPR1 to VDAC1. Component of the TIM23 mitochondrial inner membrane pre-sequence translocase complex.

It is found in the mitochondrion. The protein resides in the nucleus. It localises to the nucleolus. The protein localises to the cytoplasm. Its subcellular location is the mitochondrion matrix. It catalyses the reaction ATP + H2O = ADP + phosphate + H(+). Its activity is regulated as follows. The chaperone activity is regulated by ATP-induced allosteric coupling of the nucleotide-binding (NBD) and substrate-binding (SBD) domains. ATP binding in the NBD leads to a conformational change in the NBD, which is transferred through the interdomain linker (IDL) to the substrate-binding domain (SBD). This elicits a reduced substrate affinity and a faster substrate exchange rate. Upon hydrolysis of ATP to ADP, the protein undergoes a conformational change that increases its affinity for substrate proteins. It cycles through repeated phases of ATP hydrolysis and nucleotide exchange, facilitating repeated cycles of substrate binding and release. Functions in collaboration with co-chaperones. Functions with the co-chaperone, DNLZ, to maintain solubility and regulate ATP hydrolysis. Nucleotide exchange factors, GRPEL1 and GRPEL2, accelerate nucleotide exchange. Its function is as follows. Mitochondrial chaperone that plays a key role in mitochondrial protein import, folding, and assembly. Plays an essential role in the protein quality control system, the correct folding of proteins, the re-folding of misfolded proteins, and the targeting of proteins for subsequent degradation. These processes are achieved through cycles of ATP binding, ATP hydrolysis, and ADP release, mediated by co-chaperones. In mitochondria, it associates with the TIM (translocase of the inner membrane) protein complex to assist in the import and folding of mitochondrial proteins. Plays an important role in mitochondrial iron-sulfur cluster (ISC) biogenesis, interacts with and stabilizes ISC cluster assembly proteins FXN, NFU1, NFS1 and ISCU. Regulates erythropoiesis via stabilization of ISC assembly. Regulates mitochondrial calcium-dependent apoptosis by coupling two calcium channels, ITPR1 and VDAC1, at the mitochondria-associated endoplasmic reticulum (ER) membrane to facilitate calcium transport from the ER lumen to the mitochondria intermembrane space, providing calcium for the downstream calcium channel MCU, which releases it into the mitochondrial matrix. Although primarily located in the mitochondria, it is also found in other cellular compartments. In the cytosol, it associates with proteins involved in signaling, apoptosis, or senescence. It may play a role in cell cycle regulation via its interaction with and promotion of degradation of TP53. May play a role in the control of cell proliferation and cellular aging. Protects against reactive oxygen species (ROS). Extracellular HSPA9 plays a cytoprotective role by preventing cell lysis following immune attack by the membrane attack complex by disrupting formation of the complex. In Homo sapiens (Human), this protein is Stress-70 protein, mitochondrial.